We begin with the raw amino-acid sequence, 254 residues long: UPF0603 protein YdjH (254 aa).

The N-terminal stretch at 1–29 (MRGFFGKAIFVVLAVFIMMPLLGIEAVRA) is a signal peptide. A helical membrane pass occupies residues 166–186 (IFFTWWFQLIAAIAVGGIAVS). Residues 223–235 (VTRERKPSDKDSG) are compositionally biased toward basic and acidic residues. Residues 223-254 (VTRERKPSDKDSGSDGGVTKGGTSYSGSRGSF) are disordered. The span at 243–254 (GGTSYSGSRGSF) shows a compositional bias: polar residues.

Belongs to the UPF0603 family.

Its subcellular location is the cell membrane. This is UPF0603 protein YdjH (ydjH) from Bacillus subtilis (strain 168).